Reading from the N-terminus, the 183-residue chain is Auxin-responsive protein IAA20 (183 aa).

Disordered stretches follow at residues 1–23 (MELE…TATA) and 42–77 (GFEE…NKRR). Residues 3 to 7 (LELGL) carry the EAR-like (transcriptional repression) motif. Residues 98 to 183 (GGYVKVKMEG…KSVKRLKILV (86 aa)) form the PB1 domain.

It belongs to the Aux/IAA family. As to quaternary structure, homodimers and heterodimers. Expressed at very low levels in etiolated seedlings and flowers.

The protein localises to the nucleus. Its function is as follows. Aux/IAA proteins are short-lived transcriptional factors that function as repressors of early auxin response genes at low auxin concentrations. In Oryza sativa subsp. japonica (Rice), this protein is Auxin-responsive protein IAA20 (IAA20).